We begin with the raw amino-acid sequence, 206 residues long: Guanylyl cyclase inhibitory protein (206 aa).

The N-myristoyl glycine moiety is linked to residue glycine 2. EF-hand domains follow at residues 31-49 (SGLI…VTVG), 51-86 (NSSE…LAHG), 87-122 (TPED…VYKM), and 135-170 (TAEE…DEWV). 8 residues coordinate Ca(2+): aspartate 64, asparagine 66, aspartate 68, glutamate 75, aspartate 100, aspartate 102, aspartate 104, and glutamate 111.

In terms of tissue distribution, retina; inner segments, somata and synaptic terminals of cone receptors.

Functionally, does not stimulate guanylyl cyclase (GC) when free calcium ion concentration is low, but inhibits GC when free calcium ions concentration is elevated. This Lithobates pipiens (Northern leopard frog) protein is Guanylyl cyclase inhibitory protein (GCIP).